Reading from the N-terminus, the 189-residue chain is Inosine triphosphate pyrophosphatase (189 aa).

Residue 8–13 participates in ITP binding; that stretch reads TGNANK. E39 is a binding site for Mg(2+). Residues K51, 67–68, K84, 143–146, K167, and 172–173 contribute to the ITP site; these read DT, FGWD, and HR.

Belongs to the HAM1 NTPase family. Homodimer. Mg(2+) serves as cofactor. The cofactor is Mn(2+).

It localises to the cytoplasm. It is found in the nucleus. It catalyses the reaction ITP + H2O = IMP + diphosphate + H(+). It carries out the reaction dITP + H2O = dIMP + diphosphate + H(+). The catalysed reaction is XTP + H2O = XMP + diphosphate + H(+). In terms of biological role, pyrophosphatase that hydrolyzes non-canonical purine nucleotides such as inosine triphosphate (ITP), deoxyinosine triphosphate (dITP) or xanthosine 5'-triphosphate (XTP) to their respective monophosphate derivatives. The enzyme does not distinguish between the deoxy- and ribose forms. Probably excludes non-canonical purines from RNA and DNA precursor pools, thus preventing their incorporation into RNA and DNA and avoiding chromosomal lesions. The sequence is that of Inosine triphosphate pyrophosphatase from Cryptococcus neoformans var. neoformans serotype D (strain JEC21 / ATCC MYA-565) (Filobasidiella neoformans).